The primary structure comprises 419 residues: Peptide chain release factor subunit 1 (419 aa).

This sequence belongs to the eukaryotic release factor 1 family. In terms of assembly, heterodimer of two subunits, one of which binds GTP.

The protein resides in the cytoplasm. Functionally, directs the termination of nascent peptide synthesis (translation) in response to the termination codons UAA, UAG and UGA. The protein is Peptide chain release factor subunit 1 of Methanococcus maripaludis (strain DSM 14266 / JCM 13030 / NBRC 101832 / S2 / LL).